The primary structure comprises 65 residues: Large ribosomal subunit protein bL35c (65 aa).

It belongs to the bacterial ribosomal protein bL35 family.

Its subcellular location is the plastid. It localises to the cyanelle. This is Large ribosomal subunit protein bL35c (rpl35) from Cyanophora paradoxa.